Consider the following 465-residue polypeptide: MDNQFPSRKGPCFCSFRYVLALFMHFCNIVIIAQRMCLSLTMVAMVNNTNLHGSPNTSAEKRLDNTKNPVYNWSPDVQGIIFSSIFYGAFLIQIPVGYISGIYSIKKLIGFALFLSSLVSIFIPQAAAVGETWIIVCRVVQGITQGTVTTAQHEIWVKWAPPLERGRLTSMSLSGFLLGPFIVLLVTGIICESLGWPMVFYIFGACGCAVCLLWFVLYYDDPKDHPCVSLHEKEYITSSLIQQGSSTRQSLPIKAMIKSLPLWAISFCCFAYLWTYSRLIVYTPTLINSMLHVDIRENGLLSSLPYLFAWICGVIAGHTADFLMSRNMLSLTAIRKLFTAIGLLLPIVFSMCLLYLSSGFYSTITFLILANASSSFCLGGALINALDLAPRYYVFIKGVTTLIGMTGGMTSSTVAGLFLSQDPESSWFKIFLLMSIINVISVIFYLIFAKAEIQDWAKEKQHTRL.

N-linked (GlcNAc...) asparagine glycans are attached at residues Asn-47 and Asn-56. The next 10 helical transmembrane spans lie at 79–99 (GIIF…VGYI), 109–129 (IGFA…AAAV), 171–191 (MSLS…GIIC), 198–218 (MVFY…FVLY), 255–275 (AMIK…YLWT), 304–324 (LPYL…DFLM), 337–357 (LFTA…LYLS), 363–383 (TITF…GALI), 399–419 (VTTL…GLFL), and 428–448 (FKIF…YLIF).

Belongs to the major facilitator superfamily. Sodium/anion cotransporter family. As to quaternary structure, interacts with PDZK1. In terms of tissue distribution, kidney cortex and liver.

It is found in the apical cell membrane. It catalyses the reaction 3 Na(+)(out) + phosphate(out) = 3 Na(+)(in) + phosphate(in). The enzyme catalyses urate(out) = urate(in). In terms of biological role, important for the resorption of phosphate by the kidney. May be involved in actively transporting phosphate into cells via Na(+) cotransport in the renal brush border membrane. Plays a role in urate transport in the kidney. This Oryctolagus cuniculus (Rabbit) protein is Sodium-dependent phosphate transport protein 1 (SLC17A1).